Here is a 243-residue protein sequence, read N- to C-terminus: Adenosylcobinamide-GDP ribazoletransferase (243 aa).

5 helical membrane passes run 31-51 (LLFYPLVGLLFGVILWALNIA), 57-77 (LLLHAALLLAVWVLLSGALHL), 109-129 (IAVVTLVLVLLLKFAALLALI), 135-155 (MALIIVPLIGRAALLGLFLTT), and 188-208 (LVIAGFNAVVALLLAVIVFIW).

It belongs to the CobS family. Mg(2+) is required as a cofactor.

The protein localises to the cell inner membrane. It carries out the reaction alpha-ribazole + adenosylcob(III)inamide-GDP = adenosylcob(III)alamin + GMP + H(+). It catalyses the reaction alpha-ribazole 5'-phosphate + adenosylcob(III)inamide-GDP = adenosylcob(III)alamin 5'-phosphate + GMP + H(+). The protein operates within cofactor biosynthesis; adenosylcobalamin biosynthesis; adenosylcobalamin from cob(II)yrinate a,c-diamide: step 7/7. Its function is as follows. Joins adenosylcobinamide-GDP and alpha-ribazole to generate adenosylcobalamin (Ado-cobalamin). Also synthesizes adenosylcobalamin 5'-phosphate from adenosylcobinamide-GDP and alpha-ribazole 5'-phosphate. In Pseudomonas fluorescens (strain Pf0-1), this protein is Adenosylcobinamide-GDP ribazoletransferase.